Reading from the N-terminus, the 984-residue chain is uncharacterized protein (984 aa).

Positions 941–984 (FGPSGPGPNQGPGDDYNNFKSTKYPRNGYNKYQPNNRIHSRNRY) are disordered.

It is found in the virion. This is an uncharacterized protein from Acanthamoeba polyphaga (Amoeba).